Reading from the N-terminus, the 132-residue chain is Glycine cleavage system H protein (132 aa).

In terms of domain architecture, Lipoyl-binding spans 24–106; the sequence is IATIGLSAFA…YGDGWLIKVR (83 aa). N6-lipoyllysine is present on Lys65.

This sequence belongs to the GcvH family. In terms of assembly, the glycine cleavage system is composed of four proteins: P, T, L and H. (R)-lipoate serves as cofactor.

In terms of biological role, the glycine cleavage system catalyzes the degradation of glycine. The H protein shuttles the methylamine group of glycine from the P protein to the T protein. The sequence is that of Glycine cleavage system H protein from Rippkaea orientalis (strain PCC 8801 / RF-1) (Cyanothece sp. (strain PCC 8801)).